Here is a 71-residue protein sequence, read N- to C-terminus: Small ribosomal subunit protein bS21 (71 aa).

This sequence belongs to the bacterial ribosomal protein bS21 family.

This Blochmanniella pennsylvanica (strain BPEN) protein is Small ribosomal subunit protein bS21.